Reading from the N-terminus, the 161-residue chain is Nucleotide-binding protein RC1_3464 (161 aa).

Belongs to the YajQ family.

Functionally, nucleotide-binding protein. The sequence is that of Nucleotide-binding protein RC1_3464 from Rhodospirillum centenum (strain ATCC 51521 / SW).